Consider the following 843-residue polypeptide: Protein P (843 aa).

The interval 1 to 177 (MPLSYQHFRK…FCGSPYSWEQ (177 aa)) is terminal protein domain (TP). The segment at 178 to 346 (ELQHGRLVFQ…YCLSHLINLH (169 aa)) is spacer. 2 disordered regions span residues 218 to 243 (LKQSRLGLQPQQGSLARGKSGRSGSI) and 291 to 315 (TAQRHSPSGHAVEFHSIPPSSAGSQ). Residues 347–690 (EDWGPCIEHG…YLNLYPVARQ (344 aa)) form a polymerase/reverse transcriptase domain (RT) region. The Reverse transcriptase domain occupies 357–600 (EHNIRIPRTP…YSLNFMGYVI (244 aa)). D429, D551, and D552 together coordinate Mg(2+).

This sequence belongs to the hepadnaviridae P protein family.

The enzyme catalyses DNA(n) + a 2'-deoxyribonucleoside 5'-triphosphate = DNA(n+1) + diphosphate. The catalysed reaction is Endonucleolytic cleavage to 5'-phosphomonoester.. Activated by host HSP70 and HSP40 in vitro to be able to bind the epsilon loop of the pgRNA. Because deletion of the RNase H region renders the protein partly chaperone-independent, the chaperones may be needed indirectly to relieve occlusion of the RNA-binding site by this domain. Inhibited by several reverse-transcriptase inhibitors: Lamivudine, Adefovir and Entecavir. Multifunctional enzyme that converts the viral RNA genome into dsDNA in viral cytoplasmic capsids. This enzyme displays a DNA polymerase activity that can copy either DNA or RNA templates, and a ribonuclease H (RNase H) activity that cleaves the RNA strand of RNA-DNA heteroduplexes in a partially processive 3'- to 5'-endonucleasic mode. Neo-synthesized pregenomic RNA (pgRNA) are encapsidated together with the P protein, and reverse-transcribed inside the nucleocapsid. Initiation of reverse-transcription occurs first by binding the epsilon loop on the pgRNA genome, and is initiated by protein priming, thereby the 5'-end of (-)DNA is covalently linked to P protein. Partial (+)DNA is synthesized from the (-)DNA template and generates the relaxed circular DNA (RC-DNA) genome. After budding and infection, the RC-DNA migrates in the nucleus, and is converted into a plasmid-like covalently closed circular DNA (cccDNA). The activity of P protein does not seem to be necessary for cccDNA generation, and is presumably released from (+)DNA by host nuclear DNA repair machinery. In Hepatitis B virus genotype C subtype ayw (isolate Australia/AustRC/1992) (HBV-C), this protein is Protein P.